A 275-amino-acid chain; its full sequence is Mitochondrial prohibitin complex protein 1 (275 aa).

Residues 180-213 adopt a coiled-coil conformation; it reads REFTEAVEMKQVAQQEAEKARYLVEKAEQMKIAA.

The protein belongs to the prohibitin family. In terms of assembly, high molecular weight complex that consist of phb-1 and phb-2.

It localises to the mitochondrion inner membrane. In terms of biological role, PHB proteins are essential during embryonic development and are required for somatic and germline differentiation in the larval gonad. A deficiency in PHB proteins results in altered mitochondrial biogenesis in body wall muscle cells. The chain is Mitochondrial prohibitin complex protein 1 (phb-1) from Caenorhabditis elegans.